The following is a 353-amino-acid chain: Nuclear hormone receptor family member nhr-27 (353 aa).

Residues valine 24–threonine 102 constitute a DNA-binding region (nuclear receptor). 2 NR C4-type zinc fingers span residues cysteine 27–cysteine 47 and cysteine 64–cysteine 85. The region spanning glutamate 119 to phenylalanine 351 is the NR LBD domain. Residues glutamine 340–phenylalanine 351 are AF-2.

Belongs to the nuclear hormone receptor family.

It localises to the nucleus. In terms of biological role, ligand-activated transcription factor. Involved in lifespan extension in a manner dependent upon mitochondrial function. The chain is Nuclear hormone receptor family member nhr-27 from Caenorhabditis elegans.